A 312-amino-acid polypeptide reads, in one-letter code: MLQYQIDRIEHQIADDRSQTGVFLIGPLERGQATTLGNSLRRVLMGNLEGTAVTAVRIAGVNHEYATIPGVREDVLDILLNCKQITVNSRTSELEIGRLVVAGPATVKARDLQFSSQVQVVDGERAIATVGEGYSLELEVHVERGIGYRPVDRHNEDTSAIDLLQIDAVFMPVHRVNFTIDETAVAEGGSARERLRMEVVTDGSITPDDAIAQAANQLIELFQPLATVTMVEEVSAEPEPTAEAQIPLEELNLSVRAYNCLKRAQVNSVSDLMGFSYEDLLEIKNFGSKSADEVIEALERIGIQIPQSRTSA.

Residues 1–229 (MLQYQIDRIE…ELFQPLATVT (229 aa)) form an alpha N-terminal domain (alpha-NTD) region. The interval 239-312 (EPTAEAQIPL…IQIPQSRTSA (74 aa)) is alpha C-terminal domain (alpha-CTD).

The protein belongs to the RNA polymerase alpha chain family. As to quaternary structure, in cyanobacteria the RNAP catalytic core is composed of 2 alpha, 1 beta, 1 beta', 1 gamma and 1 omega subunit. When a sigma factor is associated with the core the holoenzyme is formed, which can initiate transcription.

It carries out the reaction RNA(n) + a ribonucleoside 5'-triphosphate = RNA(n+1) + diphosphate. In terms of biological role, DNA-dependent RNA polymerase catalyzes the transcription of DNA into RNA using the four ribonucleoside triphosphates as substrates. The sequence is that of DNA-directed RNA polymerase subunit alpha from Synechococcus sp. (strain WH7803).